A 259-amino-acid polypeptide reads, in one-letter code: Energy-coupling factor transporter ATP-binding protein EcfA1 (259 aa).

One can recognise an ABC transporter domain in the interval 3 to 230 (ITLNSVSFRY…EFDDVEIPFK (228 aa)). Residue 38 to 43 (GSGKTT) participates in ATP binding. Glu-157 (proton acceptor) is an active-site residue.

The protein belongs to the ABC transporter superfamily. Energy-coupling factor EcfA family. In terms of assembly, forms a heterodimer with EcfA2. Forms a stable energy-coupling factor (ECF) transporter complex composed of 2 membrane-embedded substrate-binding proteins (S component, RibU, BioY), 2 ATP-binding proteins (A component) and 2 transmembrane proteins (T component) upon coexpression in E.coli. Stable subcomplexes with both A plus T components can also be isolated. This complex interacts with at least 2 substrate-specific components, BioY and RibU.

It is found in the cell inner membrane. Its function is as follows. ATP-binding (A) component of a common energy-coupling factor (ECF) ABC-transporter complex. Unlike classic ABC transporters this ECF transporter provides the energy necessary to transport a number of different substrates. Expression of the complex plus RibU in E.coli allows riboflavin uptake; uptake does not occur in the absence of RibU or the EcfA1A2T complex. In Thermotoga maritima (strain ATCC 43589 / DSM 3109 / JCM 10099 / NBRC 100826 / MSB8), this protein is Energy-coupling factor transporter ATP-binding protein EcfA1.